Consider the following 384-residue polypeptide: Deoxyguanosinetriphosphate triphosphohydrolase-like protein (384 aa).

Positions E12–F39 are disordered. The segment covering H28 to F39 has biased composition (basic and acidic residues). The region spanning R73–N208 is the HD domain.

It belongs to the dGTPase family. Type 2 subfamily.

The protein is Deoxyguanosinetriphosphate triphosphohydrolase-like protein of Bordetella parapertussis (strain 12822 / ATCC BAA-587 / NCTC 13253).